Reading from the N-terminus, the 155-residue chain is Interferon gamma (155 aa).

A signal peptide spans Met-1–Cys-22. N-linked (GlcNAc...) asparagine glycans are attached at residues Asn-38 and Asn-90.

It belongs to the type II (or gamma) interferon family. Homodimer. Interacts with IFNGR1 (via extracellular domain); this interaction promotes IFNGR1 dimerization. As to expression, released primarily from activated T lymphocytes.

It localises to the secreted. Functionally, type II interferon produced by immune cells such as T-cells and NK cells that plays crucial roles in antimicrobial, antiviral, and antitumor responses by activating effector immune cells and enhancing antigen presentation. Primarily signals through the JAK-STAT pathway after interaction with its receptor IFNGR1 to affect gene regulation. Upon IFNG binding, IFNGR1 intracellular domain opens out to allow association of downstream signaling components JAK2, JAK1 and STAT1, leading to STAT1 activation, nuclear translocation and transcription of IFNG-regulated genes. Many of the induced genes are transcription factors such as IRF1 that are able to further drive regulation of a next wave of transcription. Plays a role in class I antigen presentation pathway by inducing a replacement of catalytic proteasome subunits with immunoproteasome subunits. In turn, increases the quantity, quality, and repertoire of peptides for class I MHC loading. Increases the efficiency of peptide generation also by inducing the expression of activator PA28 that associates with the proteasome and alters its proteolytic cleavage preference. Up-regulates as well MHC II complexes on the cell surface by promoting expression of several key molecules such as cathepsins B/CTSB, H/CTSH, and L/CTSL. Participates in the regulation of hematopoietic stem cells during development and under homeostatic conditions by affecting their development, quiescence, and differentiation. In Mus musculus (Mouse), this protein is Interferon gamma (Ifng).